A 494-amino-acid polypeptide reads, in one-letter code: Guanosine-5'-triphosphate,3'-diphosphate pyrophosphatase (494 aa).

The protein belongs to the GppA/Ppx family. GppA subfamily.

It carries out the reaction guanosine 3'-diphosphate 5'-triphosphate + H2O = guanosine 3',5'-bis(diphosphate) + phosphate + H(+). It participates in purine metabolism; ppGpp biosynthesis; ppGpp from GTP: step 2/2. Catalyzes the conversion of pppGpp to ppGpp. Guanosine pentaphosphate (pppGpp) is a cytoplasmic signaling molecule which together with ppGpp controls the 'stringent response', an adaptive process that allows bacteria to respond to amino acid starvation, resulting in the coordinated regulation of numerous cellular activities. The polypeptide is Guanosine-5'-triphosphate,3'-diphosphate pyrophosphatase (Citrobacter koseri (strain ATCC BAA-895 / CDC 4225-83 / SGSC4696)).